Reading from the N-terminus, the 198-residue chain is Recombination protein RecR (198 aa).

The C4-type zinc-finger motif lies at 57-72 (CRVCANIADENPCGIC). The Toprim domain occupies 80-175 (GLICVVERPR…RVTRLAFGLP (96 aa)).

This sequence belongs to the RecR family.

Its function is as follows. May play a role in DNA repair. It seems to be involved in an RecBC-independent recombinational process of DNA repair. It may act with RecF and RecO. The chain is Recombination protein RecR from Desulforudis audaxviator (strain MP104C).